We begin with the raw amino-acid sequence, 575 residues long: Urease subunit alpha (575 aa).

Positions 137 to 575 (GGIDSHIHWI…LPMAQRYFLF (439 aa)) constitute a Urease domain. Positions 142, 144, and 225 each coordinate Ni(2+). An N6-carboxylysine modification is found at Lys225. His227 provides a ligand contact to substrate. Ni(2+) is bound by residues His254 and His280. Residue His328 is the Proton donor of the active site. Residue Asp368 coordinates Ni(2+).

The protein belongs to the metallo-dependent hydrolases superfamily. Urease alpha subunit family. Heterotrimer of UreA (gamma), UreB (beta) and UreC (alpha) subunits. Three heterotrimers associate to form the active enzyme. Requires Ni cation as cofactor. Carboxylation allows a single lysine to coordinate two nickel ions.

It localises to the cytoplasm. The catalysed reaction is urea + 2 H2O + H(+) = hydrogencarbonate + 2 NH4(+). It functions in the pathway nitrogen metabolism; urea degradation; CO(2) and NH(3) from urea (urease route): step 1/1. This Leptothrix cholodnii (strain ATCC 51168 / LMG 8142 / SP-6) (Leptothrix discophora (strain SP-6)) protein is Urease subunit alpha.